Reading from the N-terminus, the 359-residue chain is Ni-sirohydrochlorin a,c-diamide reductive cyclase complex, component CfbD (359 aa).

Belongs to the NifD/NifK/NifE/NifN family. As to quaternary structure, homodimer or monomer. The Ni-sirohydrochlorin a,c-diamide reductive cyclase complex is composed of a NifH homolog component CfbC and a NifD homolog component CfbD. [4Fe-4S] cluster serves as cofactor.

It carries out the reaction Ni-sirohydrochlorin a,c-diamide + 3 AH2 + ATP + H2O = 15,17(3)-seco-F430-17(3)-acid + 3 A + ADP + phosphate. Functionally, involved in the biosynthesis of the unique nickel-containing tetrapyrrole coenzyme F430, the prosthetic group of methyl-coenzyme M reductase (MCR), which plays a key role in methanogenesis and anaerobic methane oxidation. Catalyzes both the six-electron reduction of the tetrahydroporphyrin ring system and the gamma-lactamization of the c-acetamide side chain of Ni-sirohydrochlorin a,c-diamide to yield 15,17(3)-seco-F430-17(3)-acid (seco-F430), the last intermediate in the biosynthesis of the coenzyme F430. The protein is Ni-sirohydrochlorin a,c-diamide reductive cyclase complex, component CfbD of Methanothermobacter thermautotrophicus (strain ATCC 29096 / DSM 1053 / JCM 10044 / NBRC 100330 / Delta H) (Methanobacterium thermoautotrophicum).